The following is a 211-amino-acid chain: 2,3-bisphosphoglycerate-dependent phosphoglycerate mutase (211 aa).

Residues 9–16 (RHGQSDWN), 22–23 (TG), R61, 88–91 (ERDY), K99, 115–116 (RR), and 159–160 (GN) contribute to the substrate site. H10 serves as the catalytic Tele-phosphohistidine intermediate. E88 functions as the Proton donor/acceptor in the catalytic mechanism.

It belongs to the phosphoglycerate mutase family. BPG-dependent PGAM subfamily. As to quaternary structure, homodimer.

The catalysed reaction is (2R)-2-phosphoglycerate = (2R)-3-phosphoglycerate. It functions in the pathway carbohydrate degradation; glycolysis; pyruvate from D-glyceraldehyde 3-phosphate: step 3/5. In terms of biological role, catalyzes the interconversion of 2-phosphoglycerate and 3-phosphoglycerate. The chain is 2,3-bisphosphoglycerate-dependent phosphoglycerate mutase from Rhizobium rhizogenes (strain K84 / ATCC BAA-868) (Agrobacterium radiobacter).